The sequence spans 434 residues: Serine hydroxymethyltransferase (434 aa).

120–122 (GHI) is a binding site for (6S)-5,6,7,8-tetrahydrofolate. Lys236 is subject to N6-(pyridoxal phosphate)lysine. Glu255 contacts (6S)-5,6,7,8-tetrahydrofolate.

Belongs to the SHMT family. As to quaternary structure, homodimer. It depends on pyridoxal 5'-phosphate as a cofactor.

The protein localises to the cytoplasm. Its pathway is amino-acid biosynthesis; glycine biosynthesis; glycine from L-serine: step 1/1. In terms of biological role, catalyzes the reversible interconversion of serine and glycine with a modified folate serving as the one-carbon carrier. Also exhibits a pteridine-independent aldolase activity toward beta-hydroxyamino acids, producing glycine and aldehydes, via a retro-aldol mechanism. The polypeptide is Serine hydroxymethyltransferase (Korarchaeum cryptofilum (strain OPF8)).